The primary structure comprises 240 residues: Ubiquinone biosynthesis O-methyltransferase (240 aa).

S-adenosyl-L-methionine-binding residues include Arg-44, Gly-64, Asp-85, and Met-129.

The protein belongs to the methyltransferase superfamily. UbiG/COQ3 family.

It catalyses the reaction a 3-demethylubiquinol + S-adenosyl-L-methionine = a ubiquinol + S-adenosyl-L-homocysteine + H(+). The enzyme catalyses a 3-(all-trans-polyprenyl)benzene-1,2-diol + S-adenosyl-L-methionine = a 2-methoxy-6-(all-trans-polyprenyl)phenol + S-adenosyl-L-homocysteine + H(+). The protein operates within cofactor biosynthesis; ubiquinone biosynthesis. In terms of biological role, O-methyltransferase that catalyzes the 2 O-methylation steps in the ubiquinone biosynthetic pathway. The protein is Ubiquinone biosynthesis O-methyltransferase of Escherichia coli (strain ATCC 8739 / DSM 1576 / NBRC 3972 / NCIMB 8545 / WDCM 00012 / Crooks).